The primary structure comprises 123 residues: WAP four-disulfide core domain protein 5 (123 aa).

The N-terminal stretch at 1–24 is a signal peptide; sequence MRTQSLLLLGALLAVGSQLPAVFG. WAP domains follow at residues 27–74 and 75–121; these read KGEK…VPRV and SVKL…RDPA. Intrachain disulfides connect cysteine 34–cysteine 62, cysteine 41–cysteine 66, cysteine 49–cysteine 61, cysteine 55–cysteine 70, cysteine 81–cysteine 109, cysteine 88–cysteine 113, cysteine 96–cysteine 108, and cysteine 102–cysteine 117.

It localises to the secreted. Functionally, putative acid-stable proteinase inhibitor. The sequence is that of WAP four-disulfide core domain protein 5 (WFDC5) from Gorilla gorilla gorilla (Western lowland gorilla).